We begin with the raw amino-acid sequence, 609 residues long: Hemagglutinin glycoprotein (609 aa).

Topologically, residues 1-34 (MSSPRDRVNAFYKDNLQFKNTRVVLNKEQLLIER) are intravirion. A helical; Signal-anchor for type II membrane protein transmembrane segment spans residues 35–58 (PYMLLAVLFVMFLSLVGLLAIAGI). Topologically, residues 59–609 (RLHRAAVNTA…VGIEITCNSR (551 aa)) are virion surface. Asparagine 168, asparagine 200, asparagine 215, and asparagine 395 each carry an N-linked (GlcNAc...) asparagine; by host glycan.

The protein belongs to the paramyxoviruses hemagglutinin-neuraminidase family. Non-sialidase subfamily.

The protein resides in the virion membrane. It is found in the host membrane. Attaches the virus to cell receptors and thereby initiating infection. Binding of H protein to the receptor induces a conformational change that allows the F protein to trigger virion/cell membranes fusion. Down-regulates human MCP/CD46 cell surface expression. The chain is Hemagglutinin glycoprotein (H) from Rinderpest virus (strain L) (RDV).